The primary structure comprises 370 residues: Protein PELPK1 (370 aa).

The signal sequence occupies residues methionine 1–alanine 34. 52 consecutive repeat copies span residues proline 43 to lysine 47, proline 49 to lysine 53, phenylalanine 54 to lysine 58, proline 60 to lysine 64, proline 65 to lysine 69, proline 71 to lysine 75, proline 76 to lysine 80, proline 82 to lysine 86, proline 87 to lysine 91, proline 93 to lysine 97, proline 98 to lysine 102, proline 104 to lysine 108, leucine 109 to lysine 113, proline 115 to lysine 119, proline 120 to lysine 124, proline 126 to lysine 130, proline 131 to lysine 135, proline 137 to lysine 141, proline 142 to lysine 146, proline 148 to lysine 152, proline 153 to lysine 157, proline 159 to lysine 163, proline 164 to lysine 168, proline 175 to lysine 179, proline 186 to lysine 190, proline 192 to lysine 196, proline 197 to lysine 201, proline 203 to lysine 207, proline 214 to lysine 218, proline 219 to lysine 223, proline 225 to lysine 229, proline 231 to lysine 235, proline 236 to lysine 240, proline 242 to lysine 246, leucine 247 to lysine 251, proline 253 to lysine 257, proline 258 to lysine 262, proline 264 to lysine 268, proline 270 to lysine 274, proline 275 to lysine 279, proline 281 to lysine 285, proline 286 to lysine 290, proline 292 to lysine 296, proline 303 to lysine 307, proline 314 to lysine 318, proline 319 to lysine 323, proline 325 to lysine 329, proline 330 to lysine 334, proline 336 to lysine 340, proline 344 to lysine 348, proline 355 to lysine 359, and proline 361 to lysine 365. Residues proline 43 to lysine 365 form a 52 X 5 AA tandem repeat of P-[DEGQ]-[AEFLIV]-[QPT]-K region. Over residues proline 65–lysine 223 the composition is skewed to basic and acidic residues. Residues proline 65–proline 370 are disordered. Over residues glutamate 232–lysine 262 the composition is skewed to basic and acidic residues. Composition is skewed to basic and acidic residues over residues glutamate 271–lysine 296 and proline 306–lysine 334.

It localises to the secreted. Its subcellular location is the cell wall. In terms of biological role, positive regulator of germination and plant growth. The chain is Protein PELPK1 from Arabidopsis thaliana (Mouse-ear cress).